A 100-amino-acid polypeptide reads, in one-letter code: Co-chaperonin GroES (100 aa).

This sequence belongs to the GroES chaperonin family. As to quaternary structure, heptamer of 7 subunits arranged in a ring. Interacts with the chaperonin GroEL.

Its subcellular location is the cytoplasm. Functionally, together with the chaperonin GroEL, plays an essential role in assisting protein folding. The GroEL-GroES system forms a nano-cage that allows encapsulation of the non-native substrate proteins and provides a physical environment optimized to promote and accelerate protein folding. GroES binds to the apical surface of the GroEL ring, thereby capping the opening of the GroEL channel. This Nocardia farcinica (strain IFM 10152) protein is Co-chaperonin GroES.